The primary structure comprises 622 residues: Low affinity potassium transport system protein Kup (622 aa).

A run of 12 helical transmembrane segments spans residues 12 to 32 (ITLA…LYTL), 49 to 69 (VFGF…IKYL), 103 to 123 (VIMG…TPAI), 137 to 157 (PQLD…LFMI), 165 to 185 (VGKL…VLGL), 213 to 233 (VSFI…ALYA), 247 to 267 (WFTV…ALLL), 276 to 296 (PFFL…AALA), 337 to 357 (IYIP…IVSF), 363 to 383 (LAAA…ILST), 396 to 416 (FVAL…SANL), and 419 to 439 (LLSG…IMTT).

This sequence belongs to the HAK/KUP transporter (TC 2.A.72) family.

The protein localises to the cell inner membrane. The enzyme catalyses K(+)(in) + H(+)(in) = K(+)(out) + H(+)(out). In terms of biological role, responsible for the low-affinity transport of potassium into the cell. Likely operates as a K(+):H(+) symporter. The sequence is that of Low affinity potassium transport system protein Kup from Salmonella gallinarum (strain 287/91 / NCTC 13346).